Here is a 391-residue protein sequence, read N- to C-terminus: Succinate--CoA ligase [ADP-forming] subunit beta (391 aa).

The ATP-grasp domain maps to 9–246; it reads KHLFADYDIP…ITQEDEAEVQ (238 aa). ATP-binding positions include Lys46, 53–55, Glu99, Leu102, and Glu107; that span reads GRG. The Mg(2+) site is built by Asn199 and Asp213. Substrate is bound by residues Asn266 and 323-325; that span reads GIV.

The protein belongs to the succinate/malate CoA ligase beta subunit family. Heterotetramer of two alpha and two beta subunits. It depends on Mg(2+) as a cofactor.

It carries out the reaction succinate + ATP + CoA = succinyl-CoA + ADP + phosphate. It catalyses the reaction GTP + succinate + CoA = succinyl-CoA + GDP + phosphate. The protein operates within carbohydrate metabolism; tricarboxylic acid cycle; succinate from succinyl-CoA (ligase route): step 1/1. In terms of biological role, succinyl-CoA synthetase functions in the citric acid cycle (TCA), coupling the hydrolysis of succinyl-CoA to the synthesis of either ATP or GTP and thus represents the only step of substrate-level phosphorylation in the TCA. The beta subunit provides nucleotide specificity of the enzyme and binds the substrate succinate, while the binding sites for coenzyme A and phosphate are found in the alpha subunit. This is Succinate--CoA ligase [ADP-forming] subunit beta from Alkalilimnicola ehrlichii (strain ATCC BAA-1101 / DSM 17681 / MLHE-1).